The sequence spans 872 residues: Exoglucanase A (872 aa).

An N-terminal signal peptide occupies residues 1-40; the sequence is MSTLGKRAGVRRRVRAVATAATATALVAVPLTTLATSASA. Positions 41–477 are catalytic; it reads APVHVDNPYA…PVIGGTTPVE (437 aa). Disulfide bonds link Cys-140-Cys-202 and Cys-374-Cys-428. Asp-188 (proton donor) is an active-site residue. Residue Asp-410 is the Nucleophile of the active site. Fibronectin type-III domains lie at 484–569, 579–667, and 677–765; these read VPTG…TQSG, VPAG…TQTG, and VPTG…TQAA. The 110-residue stretch at 763–872 folds into the CBM2 domain; it reads QAATSGGCTV…TLNGVACTLG (110 aa). Residues Cys-770 and Cys-869 are joined by a disulfide bond.

It belongs to the glycosyl hydrolase 6 (cellulase B) family.

The enzyme catalyses Hydrolysis of (1-&gt;4)-beta-D-glucosidic linkages in cellulose and cellotetraose, releasing cellobiose from the non-reducing ends of the chains.. Functionally, this enzyme hydrolyzes 1,4-beta-D-glucosidic linkages of cellulose. Weak activity against carboxymethylcellulose, bacterial microcrystalline cellulose and barley beta-glucan. Also has weak endoglucanase activity. Hydrolyzes glucosidic bonds with inversion of anomeric configuration. The protein is Exoglucanase A (cbhA) of Cellulomonas fimi (strain ATCC 484 / DSM 20113 / JCM 1341 / CCUG 24087 / LMG 16345 / NBRC 15513 / NCIMB 8980 / NCTC 7547 / NRS-133).